The chain runs to 158 residues: MAQTFTDTERAILRIVQKNLPDSATPYADIAEQTGTDEQTVLALLRRMKEEGSIRRFGASLKHQKAGYTHNAMVAWIVDKDTVDEVGRQAAEHRLISHVYYRPSTAPDWPYTLYTMIHGRHENEYLEVIDTLRKETALEEYAVLNSLKELKKTSMTYF.

Belongs to the Ahb/Nir family. In terms of assembly, forms a heterodimer composed of AhbA and AhbB.

The enzyme catalyses siroheme + 2 H(+) = 12,18-didecarboxysiroheme + 2 CO2. It participates in porphyrin-containing compound metabolism; protoheme biosynthesis. Involved in siroheme-dependent heme b biosynthesis. Catalyzes the decarboxylation of siroheme into didecarboxysiroheme. This Oleidesulfovibrio alaskensis (strain ATCC BAA-1058 / DSM 17464 / G20) (Desulfovibrio alaskensis) protein is Siroheme decarboxylase beta subunit.